Here is a 103-residue protein sequence, read N- to C-terminus: Large ribosomal subunit protein mL41 (103 aa).

The protein belongs to the mitochondrion-specific ribosomal protein mL41 family. As to quaternary structure, component of the mitochondrial large ribosomal subunit (mt-LSU). Mature N.crassa 74S mitochondrial ribosomes consist of a small (37S) and a large (54S) subunit. The 37S small subunit contains a 16S ribosomal RNA (16S mt-rRNA) and 32 different proteins. The 54S large subunit contains a 23S rRNA (23S mt-rRNA) and 42 different proteins.

It is found in the mitochondrion. Its function is as follows. Component of the mitochondrial ribosome (mitoribosome), a dedicated translation machinery responsible for the synthesis of mitochondrial genome-encoded proteins, including at least some of the essential transmembrane subunits of the mitochondrial respiratory chain. The mitoribosomes are attached to the mitochondrial inner membrane and translation products are cotranslationally integrated into the membrane. This chain is Large ribosomal subunit protein mL41 (mrpl27), found in Neurospora crassa (strain ATCC 24698 / 74-OR23-1A / CBS 708.71 / DSM 1257 / FGSC 987).